The following is a 163-amino-acid chain: Probable calcium-binding protein CML26 (163 aa).

The residue at position 2 (A2) is an N-acetylalanine. EF-hand domains are found at residues 16 to 51 (STDM…MGTS), 52 to 82 (YTEE…TICR), 85 to 120 (SSAV…LGMT), and 121 to 156 (CSVE…PELV). Ca(2+) is bound by residues D29, N31, D33, K35, E40, D65, D67, D69, E76, D98, N100, N102, E109, D134, D136, D138, N140, and E145.

Functionally, potential calcium sensor. The sequence is that of Probable calcium-binding protein CML26 (CML26) from Arabidopsis thaliana (Mouse-ear cress).